The following is a 332-amino-acid chain: Glycerol-3-phosphate dehydrogenase [NAD(P)+] (332 aa).

5 residues coordinate NADPH: serine 10, tryptophan 11, histidine 31, arginine 32, and lysine 105. 3 residues coordinate sn-glycerol 3-phosphate: lysine 105, glycine 136, and serine 138. Alanine 140 is an NADPH binding site. Positions 191, 244, 254, 255, and 256 each coordinate sn-glycerol 3-phosphate. Lysine 191 serves as the catalytic Proton acceptor. Arginine 255 is a binding site for NADPH. The NADPH site is built by valine 279 and glutamate 281.

Belongs to the NAD-dependent glycerol-3-phosphate dehydrogenase family.

The protein resides in the cytoplasm. It carries out the reaction sn-glycerol 3-phosphate + NAD(+) = dihydroxyacetone phosphate + NADH + H(+). It catalyses the reaction sn-glycerol 3-phosphate + NADP(+) = dihydroxyacetone phosphate + NADPH + H(+). It participates in membrane lipid metabolism; glycerophospholipid metabolism. In terms of biological role, catalyzes the reduction of the glycolytic intermediate dihydroxyacetone phosphate (DHAP) to sn-glycerol 3-phosphate (G3P), the key precursor for phospholipid synthesis. The sequence is that of Glycerol-3-phosphate dehydrogenase [NAD(P)+] from Prosthecochloris aestuarii (strain DSM 271 / SK 413).